The primary structure comprises 238 residues: Histone H1 (238 aa).

Low complexity-rich tracts occupy residues 21–34 and 123–132; these read AAVD…AKAP and AKAPAAVKPK. Disordered regions lie at residues 21–57 and 123–238; these read AAVD…AHPS and AKAP…KAKK. In terms of domain architecture, H15 spans 54–124; the sequence is AHPSYAEMVS…KVKGSYKLAK (71 aa). Positions 133-197 are enriched in basic residues; the sequence is TATKKKPAAK…AAKPKAKAAA (65 aa). Low complexity-rich tracts occupy residues 198 to 208 and 217 to 230; these read KKAPAAATPKK and KRAT…PAKK.

This sequence belongs to the histone H1/H5 family.

It localises to the nucleus. Its subcellular location is the chromosome. In terms of biological role, histones H1 are necessary for the condensation of nucleosome chains into higher-order structures. In Triticum aestivum (Wheat), this protein is Histone H1.